A 196-amino-acid polypeptide reads, in one-letter code: Large ribosomal subunit protein eL15 (196 aa).

The segment covering 69 to 98 has biased composition (basic residues); sequence RKGGSRKQRHKAGRRSKRQGVNRLSRRKSI. Disordered stretches follow at residues 69-100 and 161-196; these read RKGGSRKQRHKAGRRSKRQGVNRLSRRKSIQR and FRGLTSAGTKGRGQRTRGTGTEKTRPSVTGNDRQGK. Residues 186–196 show a composition bias toward polar residues; the sequence is PSVTGNDRQGK.

Belongs to the eukaryotic ribosomal protein eL15 family.

The polypeptide is Large ribosomal subunit protein eL15 (Halorubrum lacusprofundi (strain ATCC 49239 / DSM 5036 / JCM 8891 / ACAM 34)).